A 425-amino-acid chain; its full sequence is Adenylosuccinate synthetase (425 aa).

GTP-binding positions include 12–18 and 40–42; these read GDEGKGK and GHT. The active-site Proton acceptor is the D13. Residues D13 and G40 each contribute to the Mg(2+) site. IMP-binding positions include 13–16, 38–41, T129, R143, N221, T236, and R300; these read DEGK and NAGH. The active-site Proton donor is H41. A substrate-binding site is contributed by 296–302; that stretch reads VTTGRKR. Residues R302, 328 to 330, and 410 to 412 contribute to the GTP site; these read KLD and GVG.

This sequence belongs to the adenylosuccinate synthetase family. Homodimer. It depends on Mg(2+) as a cofactor.

It is found in the cytoplasm. It carries out the reaction IMP + L-aspartate + GTP = N(6)-(1,2-dicarboxyethyl)-AMP + GDP + phosphate + 2 H(+). It participates in purine metabolism; AMP biosynthesis via de novo pathway; AMP from IMP: step 1/2. Plays an important role in the de novo pathway and in the salvage pathway of purine nucleotide biosynthesis. Catalyzes the first committed step in the biosynthesis of AMP from IMP. The sequence is that of Adenylosuccinate synthetase from Phaeosphaeria nodorum (strain SN15 / ATCC MYA-4574 / FGSC 10173) (Glume blotch fungus).